A 1771-amino-acid polypeptide reads, in one-letter code: Kinase D-interacting substrate of 220 kDa (1771 aa).

Residues 1–499 are Cytoplasmic-facing; it reads MSVLISQSVI…QIEPLFQFSW (499 aa). ANK repeat units follow at residues 4–33, 37–66, 70–99, 103–132, 136–165, 169–198, 202–231, 235–264, 268–297, 301–330, 334–363, and 367–396; these read LISQ…DVDE, CGQT…NCNL, DNWT…NLEH, GGWT…NPSV, YSVY…KVNC, YGTT…DVDQ, NSMT…NVNL, DGNT…YVNI, SGDT…DIDI, DNKT…DTEI, DGET…KVSA, and KGDT…DGRL. In terms of domain architecture, KAP NTPase spans 440–953; the sequence is YDLYSSALAD…NIVSVTGRLL (514 aa). Residues 500–520 form a helical membrane-spanning segment; it reads LIVFLTLLLCGGLGLLFAFTV. Residues 521–524 are Extracellular-facing; sequence HPNL. The helical transmembrane segment at 525 to 545 threads the bilayer; sequence GIAVSLSFLALLYIFFIVIYF. The Cytoplasmic portion of the chain corresponds to 546 to 659; it reads GGRREGESWN…KWKKTCCLPS (114 aa). Residues 660 to 680 traverse the membrane as a helical segment; it reads FVIFLFIIGCIISGITLLAIF. Topologically, residues 681–685 are extracellular; sequence RVDPK. A helical transmembrane segment spans residues 686–706; the sequence is HLTVNAVLISIASVVGLAFVL. At 707–1771 the chain is on the cytoplasmic side; that stretch reads NCRTWWQVLD…GFGEERESIL (1065 aa). 2 positions are modified to phosphoserine: Ser882 and Ser885. Thr914 carries the phosphothreonine modification. Ser918 is modified (phosphoserine). A mediates interaction with CRKL region spans residues 1089 to 1092; the sequence is PRAP. Phosphoserine is present on Ser1163. 4 disordered regions span residues 1182–1202, 1285–1310, 1344–1368, and 1397–1564; these read DAAE…PAPG, PEDP…RASH, RHSN…SQDS, and LEGG…EPIR. Ser1296, Ser1352, Ser1359, Ser1361, Ser1362, and Ser1365 each carry phosphoserine. The segment covering 1346-1358 has biased composition (polar residues); that stretch reads SNLSWQSQTRRTP. Residues 1359–1368 show a composition bias toward low complexity; sequence SLSSLNSQDS. Polar residues predominate over residues 1403-1430; sequence STTISGRSSPHSTYYMGQSSSGGSIHSN. Basic and acidic residues predominate over residues 1431–1457; it reads LEQEKGKDSEPKPDDGRKSFLMKRGDV. The span at 1460 to 1470 shows a compositional bias: polar residues; it reads YSSSGVSTNDA. Phosphoserine occurs at positions 1521, 1526, 1555, and 1574. Over residues 1522–1532 the composition is skewed to acidic residues; the sequence is DEDESGTEESD. Residues 1537–1561 show a composition bias toward basic and acidic residues; it reads LKDDKDRKAEGKVERVPKSPEHSAE. Residues 1578–1633 are disordered; it reads LDKKDSSDSGVRSSESSPNHSLHNEVADDSQLEKANLIELEDDSHSGKRGIPHSLS. Over residues 1585 to 1594 the composition is skewed to low complexity; that stretch reads DSGVRSSESS. 2 positions are modified to phosphoserine: Ser1623 and Ser1633. A Phosphothreonine modification is found at Thr1679. Phosphoserine is present on Ser1681. Thr1684 carries the post-translational modification Phosphothreonine. A compositionally biased stretch (polar residues) spans 1713 to 1731; that stretch reads LRPSSSPNPTTIQNENLKS. The interval 1713-1771 is disordered; it reads LRPSSSPNPTTIQNENLKSMTHKRSQRSSYTRLSKDPPELHAAASSESTGFGEERESIL. Positions 1766 to 1771 match the PDZ-binding motif; it reads ERESIL.

Found in a complex, at least composed of KIDINS220, MAGI2, NTRK1 and RAPGEF2; the complex is mainly formed at late endosomes in a nerve growth factor (NGF)-dependent manner. Interacts with RAPGEF2; the interaction is strengthened after NGF stimulation. Isoform 2 interacts (via C-terminal domain) with MAGI2 isoform 1 (via PDZ domain). Interacts with NTRK1, NTRK2, NTRK3, ERKL and NGFR. Can form a ternary complex with NGFR and NTRK1 and this complex is affected by the expression levels of KIDINS220/ARMS. An increase in KIDINS220/ARMS expression leads to a decreased association of NGFR and NTRK1. Interacts (via PDZ-binding motif) with SNTA1 and SNTB2 (via PDZ domains). Interacts with EPHA4 and PRKD1. Tyrosine phosphorylated by NTRK1, NTRK2, EPHB2 and EPHA4. Phosphorylation at Ser-918 is induced by phorbol ester treatment. Phosphorylation by NTRK2 is induced by brain-derived neurotrophic factor (BDNF) and neurotrophin-4/5. Phosphorylation by NTRK1 is induced by nerve growth factor (NGF). As to expression, abundant in developing and adult neural tissues as well as neuroendocrine cells and dendritic cells. Overexpressed in melanoma and melanoma cell lines.

Its subcellular location is the membrane. It is found in the late endosome. Its function is as follows. Promotes a prolonged MAP-kinase signaling by neurotrophins through activation of a Rap1-dependent mechanism. Provides a docking site for the CRKL-C3G complex, resulting in Rap1-dependent sustained ERK activation. May play an important role in regulating postsynaptic signal transduction through the syntrophin-mediated localization of receptor tyrosine kinases such as EPHA4. In cooperation with SNTA1 can enhance EPHA4-induced JAK/STAT activation. Plays a role in nerve growth factor (NGF)-induced recruitment of RAPGEF2 to late endosomes and neurite outgrowth. May play a role in neurotrophin- and ephrin-mediated neuronal outgrowth and in axon guidance during neural development and in neuronal regeneration. Modulates stress-induced apoptosis of melanoma cells via regulation of the MEK/ERK signaling pathway. This chain is Kinase D-interacting substrate of 220 kDa (KIDINS220), found in Homo sapiens (Human).